The sequence spans 338 residues: Ketol-acid reductoisomerase (NADP(+)) (338 aa).

One can recognise a KARI N-terminal Rossmann domain in the interval 1–181 (MKVYYDKDCD…GGGRTGIIET (181 aa)). Residues 24 to 27 (YGSQ), Arg-47, Ser-50, Thr-52, and 82 to 85 (DEFQ) each bind NADP(+). His-107 is a catalytic residue. An NADP(+)-binding site is contributed by Gly-133. Residues 182–327 (TFKDETETDL…EQLRSMMPWI (146 aa)) form the KARI C-terminal knotted domain. Residues Asp-190, Glu-194, Glu-226, and Glu-230 each contribute to the Mg(2+) site. Substrate is bound at residue Ser-251.

It belongs to the ketol-acid reductoisomerase family. Mg(2+) serves as cofactor.

The catalysed reaction is (2R)-2,3-dihydroxy-3-methylbutanoate + NADP(+) = (2S)-2-acetolactate + NADPH + H(+). The enzyme catalyses (2R,3R)-2,3-dihydroxy-3-methylpentanoate + NADP(+) = (S)-2-ethyl-2-hydroxy-3-oxobutanoate + NADPH + H(+). It participates in amino-acid biosynthesis; L-isoleucine biosynthesis; L-isoleucine from 2-oxobutanoate: step 2/4. Its pathway is amino-acid biosynthesis; L-valine biosynthesis; L-valine from pyruvate: step 2/4. Its function is as follows. Involved in the biosynthesis of branched-chain amino acids (BCAA). Catalyzes an alkyl-migration followed by a ketol-acid reduction of (S)-2-acetolactate (S2AL) to yield (R)-2,3-dihydroxy-isovalerate. In the isomerase reaction, S2AL is rearranged via a Mg-dependent methyl migration to produce 3-hydroxy-3-methyl-2-ketobutyrate (HMKB). In the reductase reaction, this 2-ketoacid undergoes a metal-dependent reduction by NADPH to yield (R)-2,3-dihydroxy-isovalerate. The protein is Ketol-acid reductoisomerase (NADP(+)) of Pseudomonas fluorescens (strain SBW25).